Consider the following 417-residue polypeptide: Serine hydroxymethyltransferase (417 aa).

(6S)-5,6,7,8-tetrahydrofolate-binding positions include L117 and 121–123 (GHL). The residue at position 226 (K226) is an N6-(pyridoxal phosphate)lysine.

This sequence belongs to the SHMT family. Homodimer. The cofactor is pyridoxal 5'-phosphate.

Its subcellular location is the cytoplasm. It catalyses the reaction (6R)-5,10-methylene-5,6,7,8-tetrahydrofolate + glycine + H2O = (6S)-5,6,7,8-tetrahydrofolate + L-serine. It participates in one-carbon metabolism; tetrahydrofolate interconversion. The protein operates within amino-acid biosynthesis; glycine biosynthesis; glycine from L-serine: step 1/1. Its function is as follows. Catalyzes the reversible interconversion of serine and glycine with tetrahydrofolate (THF) serving as the one-carbon carrier. This reaction serves as the major source of one-carbon groups required for the biosynthesis of purines, thymidylate, methionine, and other important biomolecules. Also exhibits THF-independent aldolase activity toward beta-hydroxyamino acids, producing glycine and aldehydes, via a retro-aldol mechanism. The protein is Serine hydroxymethyltransferase of Syntrophus aciditrophicus (strain SB).